The following is a 936-amino-acid chain: Phosphoenolpyruvate carboxylase (936 aa).

The segment at 1-20 (MSSLNLSAGPEPVSERPDDA) is disordered. Residues His-164 and Lys-598 contribute to the active site.

The protein belongs to the PEPCase type 1 family. Mg(2+) serves as cofactor.

It carries out the reaction oxaloacetate + phosphate = phosphoenolpyruvate + hydrogencarbonate. Forms oxaloacetate, a four-carbon dicarboxylic acid source for the tricarboxylic acid cycle. This is Phosphoenolpyruvate carboxylase (ppc) from Rhodopseudomonas palustris (strain ATCC BAA-98 / CGA009).